Here is an 87-residue protein sequence, read N- to C-terminus: U3-theraphotoxin-Hhn1i (87 aa).

The first 24 residues, 1-24, serve as a signal peptide directing secretion; sequence MVNMEASMFLTFAGLVLLFVVCYA. A propeptide spanning residues 25-52 is cleaved from the precursor; sequence SESEEKEFPKEMLSSIFAVDNDFKQEER. 3 disulfide bridges follow: cysteine 54-cysteine 67, cysteine 61-cysteine 72, and cysteine 66-cysteine 79.

It belongs to the neurotoxin 10 (Hwtx-1) family. 51 (Hntx-8) subfamily. Hntx-8 sub-subfamily. As to expression, expressed by the venom gland.

The protein resides in the secreted. Ion channel inhibitor. The sequence is that of U3-theraphotoxin-Hhn1i from Cyriopagopus hainanus (Chinese bird spider).